Consider the following 203-residue polypeptide: Probable GTP-binding protein EngB (203 aa).

The 190-residue stretch at 1–190 folds into the EngB-type G domain; the sequence is MPEIVLVGRS…LEALQERVRK (190 aa). Residues 8–15, 35–39, 53–56, 132–135, and 169–171 contribute to the GTP site; these read GRSNVGKS, GVTRK, DMPG, NKID, and ISA. Residues S15 and T37 each coordinate Mg(2+).

This sequence belongs to the TRAFAC class TrmE-Era-EngA-EngB-Septin-like GTPase superfamily. EngB GTPase family. It depends on Mg(2+) as a cofactor.

Its function is as follows. Necessary for normal cell division and for the maintenance of normal septation. This chain is Probable GTP-binding protein EngB, found in Methanopyrus kandleri (strain AV19 / DSM 6324 / JCM 9639 / NBRC 100938).